The primary structure comprises 438 residues: DNA primase small subunit (438 aa).

Residues Glu-63, Asp-127, and Asp-129 contribute to the active site. The short motif at 139–149 is the Zinc knuckle motif element; that stretch reads CCSGAGVCLKC.

Belongs to the eukaryotic-type primase small subunit family. In terms of assembly, heterodimer of a catalytic subunit Prim1 and a regulatory subunit Prim2, also known as the DNA primase complex. Component of the alpha DNA polymerase complex (also known as the alpha DNA polymerase-primase complex) consisting of four subunits: the catalytic subunit PolA1, the regulatory subunit PolA2, and the primase complex subunits Prim1 and Prim2 respectively. PolA1 associates with the DNA primase complex before association with PolA2. Mg(2+) serves as cofactor. Requires Mn(2+) as cofactor. As to expression, expressed in embryos (at protein level).

The presence of the regulatory subunit Prim2 accelerates the kinetics of initiation and primer extension. Its function is as follows. Catalytic subunit of the DNA primase complex and component of the DNA polymerase alpha complex (also known as the alpha DNA polymerase-primase complex) which play an essential role in the initiation of DNA synthesis. During the S phase of the cell cycle, the DNA polymerase alpha complex (composed of a catalytic subunit PolA1, an accessory subunit PolA2 and two primase subunits, the catalytic subunit Prim1 and the regulatory subunit Prim2) is recruited to DNA at the replicative forks. The primase subunit of the polymerase alpha complex initiates DNA synthesis by oligomerising short RNA primers on both leading and lagging strands. These primers are initially extended by the polymerase alpha catalytic subunit and subsequently transferred to polymerase delta and polymerase epsilon for processive synthesis on the lagging and leading strand, respectively. In the primase complex, both subunits are necessary for the initial di-nucleotide formation, but the extension of the primer depends only on the catalytic subunit. Can add both ribo- and deoxynucleotides during elongation of the primers. Binds single stranded DNA. This is DNA primase small subunit from Drosophila melanogaster (Fruit fly).